Here is a 218-residue protein sequence, read N- to C-terminus: 4-coumaroyl-homoserine lactone synthase (218 aa).

Belongs to the autoinducer synthase family.

The catalysed reaction is 4-coumaroyl-CoA + S-adenosyl-L-methionine = N-(4-coumaroyl)-L-homoserine lactone + S-methyl-5'-thioadenosine + CoA + H(+). Functionally, catalyzes the synthesis of 4-coumaroyl-homoserine lactone, a quorum-sensing (QS) autoinducer molecule which binds to RpaR transcriptional regulator to regulate expression of QS-dependent genes. The sequence is that of 4-coumaroyl-homoserine lactone synthase from Rhodopseudomonas palustris (strain ATCC BAA-98 / CGA009).